Reading from the N-terminus, the 493-residue chain is Glutamyl-tRNA(Gln) amidotransferase subunit A (493 aa).

Residues lysine 79 and serine 159 each act as charge relay system in the active site. The active-site Acyl-ester intermediate is the serine 183.

The protein belongs to the amidase family. GatA subfamily. As to quaternary structure, heterotrimer of A, B and C subunits.

It catalyses the reaction L-glutamyl-tRNA(Gln) + L-glutamine + ATP + H2O = L-glutaminyl-tRNA(Gln) + L-glutamate + ADP + phosphate + H(+). Allows the formation of correctly charged Gln-tRNA(Gln) through the transamidation of misacylated Glu-tRNA(Gln) in organisms which lack glutaminyl-tRNA synthetase. The reaction takes place in the presence of glutamine and ATP through an activated gamma-phospho-Glu-tRNA(Gln). This chain is Glutamyl-tRNA(Gln) amidotransferase subunit A, found in Allorhizobium ampelinum (strain ATCC BAA-846 / DSM 112012 / S4) (Agrobacterium vitis (strain S4)).